We begin with the raw amino-acid sequence, 264 residues long: Phosphonoacetaldehyde hydrolase (264 aa).

The active-site Nucleophile is aspartate 9. Residues aspartate 9 and alanine 11 each coordinate Mg(2+). The Schiff-base intermediate with substrate role is filled by lysine 50. A Mg(2+)-binding site is contributed by aspartate 183.

Belongs to the HAD-like hydrolase superfamily. PhnX family. In terms of assembly, homodimer. Mg(2+) serves as cofactor.

The enzyme catalyses phosphonoacetaldehyde + H2O = acetaldehyde + phosphate + H(+). In terms of biological role, involved in phosphonate degradation. This chain is Phosphonoacetaldehyde hydrolase, found in Bacillus cereus (strain B4264).